The sequence spans 436 residues: Platelet-activating factor acetylhydrolase (436 aa).

The first 21 residues, 1 to 21, serve as a signal peptide directing secretion; that stretch reads MAPPKLHTLFCLSGFLALVHP. N-linked (GlcNAc...) asparagine glycosylation is found at Asn-76 and Asn-200. Residue Ser-271 is the Nucleophile of the active site. Asp-294 acts as the Charge relay system in catalysis. Residue Asn-324 is glycosylated (N-linked (GlcNAc...) asparagine). His-349 (charge relay system) is an active-site residue.

The protein belongs to the AB hydrolase superfamily. Lipase family. N-glycosylated. In terms of tissue distribution, plasma.

It localises to the secreted. It is found in the extracellular space. It carries out the reaction a 1-O-alkyl-2-acetyl-sn-glycero-3-phosphocholine + H2O = a 1-O-alkyl-sn-glycero-3-phosphocholine + acetate + H(+). The enzyme catalyses 1-O-decyl-2-acetyl-sn-glycero-3-phosphocholine + H2O = 1-O-decyl-sn-glycero-3-phosphocholine + acetate + H(+). The catalysed reaction is 1-O-dodecyl-2-acetyl-sn-glycero-3-phosphocholine + H2O = 1-O-dodecyl-sn-glycero-3-phosphocholine + acetate + H(+). It catalyses the reaction 1-O-tetradecyl-2-acetyl-sn-glycero-3-phosphocholine + H2O = 1-O-tetradecyl-sn-glycero-3-phosphocholine + acetate + H(+). It carries out the reaction 1-O-hexadecyl-2-acetyl-sn-glycero-3-phosphocholine + H2O = 1-O-hexadecyl-sn-glycero-3-phosphocholine + acetate + H(+). The enzyme catalyses 1-O-octadecyl-2-acetyl-sn-glycero-3-phosphocholine + H2O = 1-O-octadecyl-sn-glycero-3-phosphocholine + acetate + H(+). The catalysed reaction is 1-hexadecanoyl-2-acetyl-sn-glycero-3-phosphocholine + H2O = 1-hexadecanoyl-sn-glycero-3-phosphocholine + acetate + H(+). It catalyses the reaction 1-hexadecanoyl-2-propionyl-sn-glycero-3-phosphocholine + H2O = propanoate + 1-hexadecanoyl-sn-glycero-3-phosphocholine + H(+). It carries out the reaction 1-hexadecanoyl-2-butanoyl-sn-glycero-3-phosphocholine + H2O = butanoate + 1-hexadecanoyl-sn-glycero-3-phosphocholine + H(+). The enzyme catalyses 1-hexadecanoyl-2-pentanoyl-sn-glycero-3-phosphocholine + H2O = pentanoate + 1-hexadecanoyl-sn-glycero-3-phosphocholine + H(+). The catalysed reaction is 1-hexadecanoyl-2-glutaroyl-sn-glycero-3-phosphocholine + H2O = glutarate + 1-hexadecanoyl-sn-glycero-3-phosphocholine + H(+). It catalyses the reaction 1-hexadecanoyl-2-(5-oxopentanoyl)-sn-glycero-3-phosphocholine + H2O = 5-oxopentanoate + 1-hexadecanoyl-sn-glycero-3-phosphocholine + H(+). It carries out the reaction 1-hexadecanoyl-2-(9-oxononanoyl)-sn-glycero-3-phosphocholine + H2O = 9-oxononanoate + 1-hexadecanoyl-sn-glycero-3-phosphocholine + H(+). The enzyme catalyses 1-hexadecanoyl-2-[9-hydroperoxy-(10E-octadecenoyl)]-sn-glycero-3-phosphocholine + H2O = 9-hydroperoxy-10E-octadecenoate + 1-hexadecanoyl-sn-glycero-3-phosphocholine + H(+). The catalysed reaction is 1-hexadecanoyl-2-(10-hydroperoxy-8E-octadecenoyl)-sn-glycero-3-phosphocholine + H2O = 10-hydroperoxy-(8E)-octadecenoate + 1-hexadecanoyl-sn-glycero-3-phosphocholine + H(+). Lipoprotein-associated calcium-independent phospholipase A2 involved in phospholipid catabolism during inflammatory and oxidative stress response. At the lipid-aqueous interface, hydrolyzes the ester bond of fatty acyl group attached at sn-2 position of phospholipids (phospholipase A2 activity). Specifically targets phospholipids with a short-chain fatty acyl group at sn-2 position. Can hydrolyze phospholipids with long fatty acyl chains, only if they carry oxidized functional groups. Hydrolyzes and inactivates platelet-activating factor (PAF, 1-O-alkyl-2-acetyl-sn-glycero-3-phosphocholine), a potent pro-inflammatory signaling lipid that acts through PTAFR on various innate immune cells. Hydrolyzes oxidatively truncated phospholipids carrying an aldehyde group at omega position, preventing their accumulation in lipoprotein particles and uncontrolled pro-inflammatory effects. As part of high-density lipoprotein (HDL) particles, can hydrolyze phospholipids having long-chain fatty acyl hydroperoxides at sn-2 position and protect against potential accumulation of these oxylipins in the vascular wall. Catalyzes the release from membrane phospholipids of F2-isoprostanes, lipid biomarkers of cellular oxidative damage. This chain is Platelet-activating factor acetylhydrolase (PLA2G7), found in Cavia porcellus (Guinea pig).